The sequence spans 1349 residues: DNA-directed RNA polymerase subunit beta' (1349 aa).

Positions 219, 293, 300, and 303 each coordinate Zn(2+). Positions 1298 to 1349 are disordered; that stretch reads LDSPTLGESGFGSRRAERSVLDDEDELIADEVVDDDDFEEEEEDDEDDFDDE. Residues 1319–1349 are compositionally biased toward acidic residues; the sequence is DDEDELIADEVVDDDDFEEEEEDDEDDFDDE.

The protein belongs to the RNA polymerase beta' chain family. RpoC2 subfamily. In cyanobacteria the RNAP catalytic core is composed of 2 alpha, 1 beta, 1 beta', 1 gamma and 1 omega subunit. When a sigma factor is associated with the core the holoenzyme is formed, which can initiate transcription. Zn(2+) serves as cofactor.

It carries out the reaction RNA(n) + a ribonucleoside 5'-triphosphate = RNA(n+1) + diphosphate. In terms of biological role, DNA-dependent RNA polymerase catalyzes the transcription of DNA into RNA using the four ribonucleoside triphosphates as substrates. This chain is DNA-directed RNA polymerase subunit beta', found in Nostoc punctiforme (strain ATCC 29133 / PCC 73102).